The chain runs to 524 residues: Vang-like protein 1 (524 aa).

The span at Met1–Ser15 shows a compositional bias: low complexity. Positions Met1–His85 are disordered. The Cytoplasmic portion of the chain corresponds to Met1–Ser117. Polar residues predominate over residues Gly73–His85. A phosphoserine mark is found at Ser86 and Ser88. The helical transmembrane segment at Phe118–Trp138 threads the bilayer. The Extracellular portion of the chain corresponds to Arg139–Gly151. The helical transmembrane segment at Leu152–Phe172 threads the bilayer. The Cytoplasmic portion of the chain corresponds to Arg173–Val182. A helical transmembrane segment spans residues Phe183–Phe203. At Tyr204–Tyr222 the chain is on the extracellular side. The chain crosses the membrane as a helical span at residues Ala223–Leu243. At Arg244–Val524 the chain is on the cytoplasmic side.

It belongs to the Vang family. In terms of assembly, heterodimer with VANGL2. Interacts through its C-terminal region with the N-terminal half of DVL1, DVL2 and DVL3. The PDZ domain of DVL1, DVL2 and DVL3 is required for the interaction. As to expression, according to PubMed:11956595, ubiquitously expressed. According to PubMed:12011995, expressed specifically in testis and ovary.

It is found in the cell membrane. This Homo sapiens (Human) protein is Vang-like protein 1 (VANGL1).